The chain runs to 112 residues: Small ribosomal subunit protein bS6 (112 aa).

The protein belongs to the bacterial ribosomal protein bS6 family.

Binds together with bS18 to 16S ribosomal RNA. In Chlamydia trachomatis serovar L2 (strain ATCC VR-902B / DSM 19102 / 434/Bu), this protein is Small ribosomal subunit protein bS6.